Here is a 291-residue protein sequence, read N- to C-terminus: Insulin-like growth factor-binding protein 3 (291 aa).

The N-terminal stretch at 1 to 27 (MLRARPALWAAALTALTLLRGPPAARA) is a signal peptide. Residues 28–134 (GAGTMGAGPV…LRPYLLPSAS (107 aa)) form an IGF-binding region. One can recognise an IGFBP N-terminal domain in the interval 36–119 (PVVRCEPCDA…LDGRGLCANA (84 aa)). Disulfide bonds link Cys-40–Cys-69, Cys-43–Cys-71, Cys-51–Cys-72, Cys-60–Cys-75, Cys-83–Cys-96, and Cys-90–Cys-116. 2 N-linked (GlcNAc...) asparagine glycosylation sites follow: Asn-118 and Asn-136. 2 disordered regions span residues 132–162 (SASGNGSESEEDHSMGSTENQAGPSTHRVPV) and 177–211 (KGHAKDSQRYKVDYESQSTDTQNFSSESKRETEYG). Polar residues predominate over residues 146 to 155 (MGSTENQAGP). Ser-148 bears the Phosphoserine mark. The span at 177–190 (KGHAKDSQRYKVDY) shows a compositional bias: basic and acidic residues. A compositionally biased stretch (polar residues) spans 191–202 (ESQSTDTQNFSS). N-linked (GlcNAc...) asparagine glycosylation is present at Asn-199. Ser-201 carries the phosphoserine modification. The Thyroglobulin type-1 domain occupies 210–285 (YGPCRREMED…DVKGKGDVHC (76 aa)). 3 disulfide bridges follow: Cys-213–Cys-240, Cys-251–Cys-262, and Cys-264–Cys-285.

In terms of assembly, interacts with XLKD1. Binds IGF2 more than IGF1. Forms a ternary complex of about 140 to 150 kDa with IGF1 or IGF2 and a 85 kDa glycoprotein (ALS). Interacts with humanin; humanin competes with importin KPNB1 for binding to IGFBP3, blocking IGFBP3 nuclear import and IGFBP3-mediated apoptosis. Interacts with TMEM219. Interacts with RXRA; this interaction modulates the transcriptional activity of RXRA. Interacts with LRP1; this interaction mediates cell growth inhibition independent of IGF1. In terms of processing, phosphorylated by FAM20C in the extracellular medium. Phosphorylated by CK2; resulting in decreased nuclear localization. As to expression, plasma; expressed by most tissues.

It localises to the secreted. The protein resides in the nucleus. Its function is as follows. Multifunctional protein that plays a critical role in regulating the availability of IGFs such as IGF1 and IGF2 to their receptors and thereby regulates IGF-mediated cellular processes including proliferation, differentiation, and apoptosis in a cell-type specific manner. Also exhibits IGF-independent antiproliferative and apoptotic effects mediated by its receptor TMEM219/IGFBP-3R. Inhibits the positive effect of humanin on insulin sensitivity. Promotes testicular germ cell apoptosis. Acts via LRP-1/alpha2M receptor, also known as TGF-beta type V receptor, to mediate cell growth inhibition independent of IGF1. Mechanistically, induces serine-specific dephosphorylation of IRS1 or IRS2 upon ligation to its receptor, leading to the inhibitory cascade. In the nucleus, interacts with transcription factors such as retinoid X receptor-alpha/RXRA to regulate transcriptional signaling and apoptosis. The protein is Insulin-like growth factor-binding protein 3 (IGFBP3) of Bos taurus (Bovine).